The sequence spans 883 residues: Envelope glycoprotein B (883 aa).

The signal sequence occupies residues 1–31; sequence MQSYIAVNIDMASLKMLICVCVAILIPSTLS. Residues 32-750 are Virion surface-facing; the sequence is QDSHGIGWNN…SGIASFLSNP (719 aa). 5 disulfides stabilise this stretch: cysteine 77/cysteine 535, cysteine 94/cysteine 491, cysteine 167/cysteine 229, cysteine 321/cysteine 369, and cysteine 558/cysteine 608. 2 N-linked (GlcNAc...) asparagine; by host glycosylation sites follow: asparagine 102 and asparagine 121. The segment at 134 to 140 is involved in fusion and/or binding to host membrane; it reads TWALFSR. The N-linked (GlcNAc...) asparagine; by host glycan is linked to asparagine 211. Residues 216-223 form an involved in fusion and/or binding to host membrane region; the sequence is HQTLGYRT. N-linked (GlcNAc...) asparagine; by host glycans are attached at residues asparagine 262 and asparagine 360. Residues 428 to 457 form a disordered region; it reads QNHLPRGRERRQAAGRRTASLQSGPQGDRI. Asparagine 579, asparagine 635, and asparagine 649 each carry an N-linked (GlcNAc...) asparagine; by host glycan. Hydrophobic membrane proximal region stretches follow at residues 694-748 and 724-744; these read IDTV…SFLS and ALGT…SGIA. Residues 751–771 traverse the membrane as a helical segment; the sequence is FAALAIGIAVVVSIILGLLAF. Residues 772–883 are Intravirion-facing; the sequence is KYVMNLKSNP…PSWAEESEDE (112 aa). The interval 791-817 is disordered; that stretch reads PPAGTPPRPSRRYYKDEEEVEEDSDED. Residues 806–817 show a composition bias toward acidic residues; sequence DEEEVEEDSDED. The Internalization motif motif lies at 868–871; sequence YPLL.

It belongs to the herpesviridae glycoprotein B family. Homotrimer; disulfide-linked. Binds to heparan sulfate proteoglycans. Interacts with gH/gL heterodimer. In terms of processing, a proteolytic cleavage by host furin generates two subunits that remain linked by disulfide bonds.

It localises to the virion membrane. The protein resides in the host cell membrane. It is found in the host endosome membrane. Its subcellular location is the host Golgi apparatus membrane. Functionally, envelope glycoprotein that forms spikes at the surface of virion envelope. Essential for the initial attachment to heparan sulfate moieties of the host cell surface proteoglycans. Involved in fusion of viral and cellular membranes leading to virus entry into the host cell. Following initial binding to its host receptors, membrane fusion is mediated by the fusion machinery composed at least of gB and the heterodimer gH/gL. May be involved in the fusion between the virion envelope and the outer nuclear membrane during virion egress. In Infectious laryngotracheitis virus (strain SA-2) (ILTV), this protein is Envelope glycoprotein B.